A 355-amino-acid polypeptide reads, in one-letter code: MIMTLRWFGKNFDSVTLKQIRQIPGVKGVITTLYDSKVGDAWKEEDVKNIKKEVEDAGLKIYGIESVNILDDIKIGLPSRDKYIENYIKTLEVLGKEGINLVCYNFMPVFDWTRSDLAKVRPDGSTVLSYDQDIIDKIDPQKMFEQIDSNSNGFVLPGWEPERLSRLKELFEMYKGIDDEKLFENLKYFLTAIMPTCEKYNIKMAIHPDDPAWPVFGLPRIIVNKENILRMVNSVNSPCNGITLCAGSLGSNPKNDIPDIIRSLKGKIFFAHVRNLEHTAPGKFQEAAHLSSDGSMDMFAIMKAFYDIGFEGPFRPDHGRAIWDEVSMPGYGLYDRALGAVYLQGLWEAIEKMGK.

This sequence belongs to the mannonate dehydratase family. Fe(2+) is required as a cofactor. Requires Mn(2+) as cofactor.

It carries out the reaction D-mannonate = 2-dehydro-3-deoxy-D-gluconate + H2O. The protein operates within carbohydrate metabolism; pentose and glucuronate interconversion. Catalyzes the dehydration of D-mannonate. The protein is Mannonate dehydratase of Brachyspira hyodysenteriae (strain ATCC 49526 / WA1).